Reading from the N-terminus, the 209-residue chain is Mediator of RNA polymerase II transcription subunit 20 (209 aa).

The protein belongs to the Mediator complex subunit 20 family. In terms of assembly, component of the Mediator complex.

It is found in the nucleus. Functionally, component of the Mediator complex, a coactivator involved in the regulated transcription of nearly all RNA polymerase II-dependent genes. Mediator functions as a bridge to convey information from gene-specific regulatory proteins to the basal RNA polymerase II transcription machinery. Mediator is recruited to promoters by direct interactions with regulatory proteins and serves as a scaffold for the assembly of a functional preinitiation complex with RNA polymerase II and the general transcription factors. The chain is Mediator of RNA polymerase II transcription subunit 20 (SRB2) from Eremothecium gossypii (strain ATCC 10895 / CBS 109.51 / FGSC 9923 / NRRL Y-1056) (Yeast).